We begin with the raw amino-acid sequence, 192 residues long: Erythropoietin (192 aa).

Positions 1-26 are cleaved as a signal peptide; the sequence is MGVPERPTLLLLLSLLLIPLGLPVLC. C33 and C187 form a disulfide bridge. N50, N64, and N109 each carry an N-linked (GlcNAc...) asparagine glycan.

The protein belongs to the EPO/TPO family. As to expression, produced by kidney or liver of adult mammals and by liver of fetal or neonatal mammals.

The protein localises to the secreted. In terms of biological role, hormone involved in the regulation of erythrocyte proliferation and differentiation and the maintenance of a physiological level of circulating erythrocyte mass. Binds to EPOR leading to EPOR dimerization and JAK2 activation thereby activating specific downstream effectors, including STAT1 and STAT3. In Rattus norvegicus (Rat), this protein is Erythropoietin (Epo).